The chain runs to 108 residues: Parvalbumin alpha (108 aa).

A1 carries the post-translational modification N-acetylalanine. 2 consecutive EF-hand domains span residues 37–72 (MSAN…FAAD) and 76–108 (LTDA…VHEA). D50, D52, S54, F56, E58, E61, D89, D91, D93, K95, and E100 together coordinate Ca(2+).

The protein belongs to the parvalbumin family.

Functionally, in muscle, parvalbumin is thought to be involved in relaxation after contraction. It binds two calcium ions. In Esox lucius (Northern pike), this protein is Parvalbumin alpha.